The primary structure comprises 333 residues: tRNA dimethylallyltransferase (333 aa).

16-23 serves as a coordination point for ATP; sequence GPTASGKT. Substrate is bound at residue 18–23; it reads TASGKT. Interaction with substrate tRNA regions lie at residues 41–44, 165–169, and 253–258; these read DSAL, QRISR, and RCVGYR.

Belongs to the IPP transferase family. As to quaternary structure, monomer. Mg(2+) is required as a cofactor.

It catalyses the reaction adenosine(37) in tRNA + dimethylallyl diphosphate = N(6)-dimethylallyladenosine(37) in tRNA + diphosphate. Its function is as follows. Catalyzes the transfer of a dimethylallyl group onto the adenine at position 37 in tRNAs that read codons beginning with uridine, leading to the formation of N6-(dimethylallyl)adenosine (i(6)A). The polypeptide is tRNA dimethylallyltransferase (Polaromonas sp. (strain JS666 / ATCC BAA-500)).